Here is a 253-residue protein sequence, read N- to C-terminus: 3-deoxy-manno-octulosonate cytidylyltransferase (253 aa).

It belongs to the KdsB family.

The protein localises to the cytoplasm. The enzyme catalyses 3-deoxy-alpha-D-manno-oct-2-ulosonate + CTP = CMP-3-deoxy-beta-D-manno-octulosonate + diphosphate. It functions in the pathway nucleotide-sugar biosynthesis; CMP-3-deoxy-D-manno-octulosonate biosynthesis; CMP-3-deoxy-D-manno-octulosonate from 3-deoxy-D-manno-octulosonate and CTP: step 1/1. It participates in bacterial outer membrane biogenesis; lipopolysaccharide biosynthesis. Activates KDO (a required 8-carbon sugar) for incorporation into bacterial lipopolysaccharide in Gram-negative bacteria. This Neisseria meningitidis serogroup C (strain 053442) protein is 3-deoxy-manno-octulosonate cytidylyltransferase.